We begin with the raw amino-acid sequence, 192 residues long: Adenylate kinase (192 aa).

An ATP-binding site is contributed by 10–15 (GAGKGT). Positions 30-59 (STGDMLREAIEKETEIGKQAKIFIESGALV) are NMP. AMP-binding positions include T31, R36, 57-59 (ALV), 85-88 (GYPR), and Q92. Residues 126–142 (KRVEEVVAVGGKIRSDD) form an LID region. Position 127 (R127) interacts with ATP. The AMP site is built by R139 and R150. A178 is an ATP binding site.

It belongs to the adenylate kinase family. In terms of assembly, monomer.

It localises to the cytoplasm. The catalysed reaction is AMP + ATP = 2 ADP. Its pathway is purine metabolism; AMP biosynthesis via salvage pathway; AMP from ADP: step 1/1. In terms of biological role, catalyzes the reversible transfer of the terminal phosphate group between ATP and AMP. Plays an important role in cellular energy homeostasis and in adenine nucleotide metabolism. The protein is Adenylate kinase of Bartonella bacilliformis (strain ATCC 35685 / KC583 / Herrer 020/F12,63).